The chain runs to 472 residues: F420-non-reducing hydrogenase subunit A (472 aa).

Cysteine 61, cysteine 64, cysteine 442, and cysteine 445 together coordinate Ni(2+).

Belongs to the [NiFe]/[NiFeSe] hydrogenase large subunit family. The F420-non-reducing hydrogenase is composed of three subunits; MvhA, MvhD and MvhG. It forms a complex with the heterodisulfide reductase (hdr). The cofactor is Ni(2+).

In terms of biological role, part of a complex that provides reducing equivalents for heterodisulfide reductase. The sequence is that of F420-non-reducing hydrogenase subunit A (mvhA) from Methanothermobacter thermautotrophicus (strain ATCC 29096 / DSM 1053 / JCM 10044 / NBRC 100330 / Delta H) (Methanobacterium thermoautotrophicum).